We begin with the raw amino-acid sequence, 342 residues long: Cathepsin B-like cysteine proteinase 1 (342 aa).

A signal peptide spans Met-1–Ala-18. The propeptide at Asp-19 to Asp-86 is activation peptide. Asn-99 carries N-linked (GlcNAc...) asparagine glycosylation. 6 disulfide bridges follow: Cys-100–Cys-128, Cys-111–Cys-156, Cys-147–Cys-214, Cys-148–Cys-152, Cys-185–Cys-218, and Cys-193–Cys-205. Cys-114 is an active-site residue. An N-linked (GlcNAc...) asparagine glycan is attached at Asn-138. Residue Asn-198 is glycosylated (N-linked (GlcNAc...) asparagine). The active site involves His-285. An N-linked (GlcNAc...) asparagine glycan is attached at Asn-296. Asn-305 is an active-site residue.

The protein belongs to the peptidase C1 family.

Its function is as follows. Expression of the protease correlates with blood-feeding and suggests a role for the protease in blood digestion. This chain is Cathepsin B-like cysteine proteinase 1 (AC-1), found in Haemonchus contortus (Barber pole worm).